A 144-amino-acid polypeptide reads, in one-letter code: Large ribosomal subunit protein uL15 (144 aa).

A disordered region spans residues Met1–Gly52. Over residues Arg21–Gly31 the composition is skewed to gly residues.

It belongs to the universal ribosomal protein uL15 family. Part of the 50S ribosomal subunit.

Its function is as follows. Binds to the 23S rRNA. The sequence is that of Large ribosomal subunit protein uL15 from Haemophilus ducreyi (strain 35000HP / ATCC 700724).